The sequence spans 259 residues: Deoxyribose-phosphate aldolase (259 aa).

The active-site Proton donor/acceptor is aspartate 102. The active-site Schiff-base intermediate with acetaldehyde is the lysine 167. Lysine 201 acts as the Proton donor/acceptor in catalysis.

Belongs to the DeoC/FbaB aldolase family. DeoC type 2 subfamily.

It is found in the cytoplasm. It catalyses the reaction 2-deoxy-D-ribose 5-phosphate = D-glyceraldehyde 3-phosphate + acetaldehyde. Its pathway is carbohydrate degradation; 2-deoxy-D-ribose 1-phosphate degradation; D-glyceraldehyde 3-phosphate and acetaldehyde from 2-deoxy-alpha-D-ribose 1-phosphate: step 2/2. Its function is as follows. Catalyzes a reversible aldol reaction between acetaldehyde and D-glyceraldehyde 3-phosphate to generate 2-deoxy-D-ribose 5-phosphate. This is Deoxyribose-phosphate aldolase from Shigella flexneri.